We begin with the raw amino-acid sequence, 1151 residues long: UDP-N-acetylglucosamine--peptide N-acetylglucosaminyltransferase (1151 aa).

12 TPR repeats span residues 125 to 158 (LKKVTELAHRQFQSGNYVEAEKYCNLVFQSDPNN), 193 to 226 (AEAYSNLGNYYKEKGQLQDALENYKLAVKLKPEF), 227 to 260 (IDAYINLAAALVSGGDLEQAVTAYFNALQINPDL), 261 to 294 (YCVRSDLGNLLKAMGRLEEAKVCYLKAIETQPQF), 295 to 328 (AVAWSNLGCVFNSQGEIWLAIHHFEKAVTLDPNF), 329 to 362 (LDAYINLGNVLKEARIFDRAVSAYLRALNLSGNH), 363 to 396 (AVVHGNLACVYYEQGLIDLAIDTYKKAIDLQPHF), 397 to 430 (PDAYCNLANALKEKGSVVEAEQMYMKALELCPTH), 431 to 464 (ADSQNNLANIKREQGKIEDATRLYLKALEIYPEF), 465 to 498 (AAAHSNLASILQQQGKLNDAILHYKEAIRIAPTF), 499 to 532 (ADAYSNMGNTLKEMGDSSAAIACYNRAIQINPAF), and 533 to 566 (ADAHSNLASIHKDAGNMAEAIQSYSTALKLKPDF). Residues 567 to 577 (PDAYCNLAHCH) form a TPR 13; truncated repeat. Positions 591–607 (RKLVQIVEDQLCKKRLP) match the Nuclear localization signal motif. His612 (proton acceptor) is an active-site residue. Residues Gln954, Lys957, 1010 to 1013 (VAAK), 1016 to 1019 (HVRR), 1034 to 1036 (GHT), and Asp1040 contribute to the UDP site.

Belongs to the glycosyltransferase 41 family. O-GlcNAc transferase subfamily.

It localises to the nucleus. The protein resides in the cytoplasm. The protein localises to the perinuclear region. It catalyses the reaction L-seryl-[protein] + UDP-N-acetyl-alpha-D-glucosamine = 3-O-(N-acetyl-beta-D-glucosaminyl)-L-seryl-[protein] + UDP + H(+). The enzyme catalyses L-threonyl-[protein] + UDP-N-acetyl-alpha-D-glucosamine = 3-O-(N-acetyl-beta-D-glucosaminyl)-L-threonyl-[protein] + UDP + H(+). The protein operates within protein modification; protein glycosylation. Functionally, addition of nucleotide-activated sugars directly onto the polypeptide through O-glycosidic linkage with the hydroxyl of serine or threonine. Influences tap habituation in the mechanosensory neurons cell autonomously. In Caenorhabditis elegans, this protein is UDP-N-acetylglucosamine--peptide N-acetylglucosaminyltransferase (ogt-1).